The chain runs to 190 residues: MNNNLQGDAIAAAIDVLNEKRVIAYPTEAVFGVGCDPDSETAVMRLLELKQRPVDKGLILIAANYEQLKPYIDDTMLTDVQRETIFSCWPGPVTFVFPAPATTPRWLTGRFDSLAVRVTDHPLVVALCQAYGKPLVSTSANLSGLPPCRTVDEVRAQFGAAFPVVPGETRGRLNPSEIRDALTGELFRQG.

The YrdC-like domain maps to 7–190 (GDAIAAAIDV…ALTGELFRQG (184 aa)).

This sequence belongs to the SUA5 family. TsaC subfamily.

Its subcellular location is the cytoplasm. It carries out the reaction L-threonine + hydrogencarbonate + ATP = L-threonylcarbamoyladenylate + diphosphate + H2O. Its function is as follows. Required for the formation of a threonylcarbamoyl group on adenosine at position 37 (t(6)A37) in tRNAs that read codons beginning with adenine. Catalyzes the conversion of L-threonine, HCO(3)(-)/CO(2) and ATP to give threonylcarbamoyl-AMP (TC-AMP) as the acyladenylate intermediate, with the release of diphosphate. This chain is Threonylcarbamoyl-AMP synthase, found in Shigella flexneri.